The primary structure comprises 139 residues: Hydrogenase maturation factor HypA (139 aa).

Residue His2 participates in Ni(2+) binding. The Zn(2+) site is built by Cys73, Cys76, Cys110, and Cys113.

It belongs to the HypA/HybF family.

In terms of biological role, involved in the maturation of [NiFe] hydrogenases. Required for nickel insertion into the metal center of the hydrogenase. The sequence is that of Hydrogenase maturation factor HypA from Thermococcus gammatolerans (strain DSM 15229 / JCM 11827 / EJ3).